The sequence spans 65 residues: Large ribosomal subunit protein bL28 (65 aa).

A disordered region spans residues 1-26 (MARRDDLTNKGPMSGNKRSHALNATK). Over residues 17–26 (KRSHALNATK) the composition is skewed to basic residues.

The protein belongs to the bacterial ribosomal protein bL28 family.

This is Large ribosomal subunit protein bL28 from Mycoplasma mobile (strain ATCC 43663 / 163K / NCTC 11711) (Mesomycoplasma mobile).